The chain runs to 168 residues: Transcription elongation factor GreB (168 aa).

It belongs to the GreA/GreB family. GreB subfamily.

Its function is as follows. Necessary for efficient RNA polymerase transcription elongation past template-encoded arresting sites. The arresting sites in DNA have the property of trapping a certain fraction of elongating RNA polymerases that pass through, resulting in locked ternary complexes. Cleavage of the nascent transcript by cleavage factors such as GreA or GreB allows the resumption of elongation from the new 3'terminus. GreB releases sequences of up to 9 nucleotides in length. In Xanthomonas axonopodis pv. citri (strain 306), this protein is Transcription elongation factor GreB.